A 92-amino-acid chain; its full sequence is C-C motif chemokine 3 (92 aa).

The first 23 residues, 1–23 (MQVSTAALAVLLCTMALCNQFSA), serve as a signal peptide directing secretion. Disulfide bonds link Cys33–Cys57 and Cys34–Cys73.

The protein belongs to the intercrine beta (chemokine CC) family. As to quaternary structure, self-associates. Also heterodimer of MIP-1-alpha(4-69) and MIP-1-beta(3-69). Interacts with CCR1.

The protein resides in the secreted. Monokine with inflammatory and chemokinetic properties. Binds to CCR1, CCR4 and CCR5. One of the major HIV-suppressive factors produced by CD8+ T-cells. Recombinant MIP-1-alpha induces a dose-dependent inhibition of different strains of HIV-1, HIV-2, and simian immunodeficiency virus (SIV). The polypeptide is C-C motif chemokine 3 (CCL3) (Pan troglodytes (Chimpanzee)).